The primary structure comprises 128 residues: Probable prefoldin subunit 6 (128 aa).

Belongs to the prefoldin subunit beta family. As to quaternary structure, heterohexamer of two PFD-alpha type and four PFD-beta type subunits.

Its subcellular location is the cytoplasm. In terms of biological role, binds specifically to cytosolic chaperonin (c-CPN) and transfers target proteins to it. Binds to nascent polypeptide chain and promotes folding in an environment in which there are many competing pathways for nonnative proteins. Required for positioning of the mitotic spindle. This is Probable prefoldin subunit 6 from Caenorhabditis briggsae.